Reading from the N-terminus, the 125-residue chain is Large ribosomal subunit protein bL12 (125 aa).

It belongs to the bacterial ribosomal protein bL12 family. In terms of assembly, homodimer. Part of the ribosomal stalk of the 50S ribosomal subunit. Forms a multimeric L10(L12)X complex, where L10 forms an elongated spine to which 2 to 4 L12 dimers bind in a sequential fashion. Binds GTP-bound translation factors.

Its function is as follows. Forms part of the ribosomal stalk which helps the ribosome interact with GTP-bound translation factors. Is thus essential for accurate translation. In Granulibacter bethesdensis (strain ATCC BAA-1260 / CGDNIH1), this protein is Large ribosomal subunit protein bL12.